A 131-amino-acid chain; its full sequence is Methylglyoxal synthase (131 aa).

In terms of domain architecture, MGS-like spans 1 to 131 (MKIALIAHDK…GDLDYRKLRK (131 aa)). Substrate is bound by residues His8, Lys12, 34-37 (TGTT), and 54-55 (SG). Residue Asp60 is the Proton donor/acceptor of the active site. Substrate is bound at residue His87.

Belongs to the methylglyoxal synthase family.

It carries out the reaction dihydroxyacetone phosphate = methylglyoxal + phosphate. Functionally, catalyzes the formation of methylglyoxal from dihydroxyacetone phosphate. The chain is Methylglyoxal synthase from Bacillus cereus (strain AH820).